Consider the following 192-residue polypeptide: Glycerol-3-phosphate acyltransferase (192 aa).

Transmembrane regions (helical) follow at residues 4 to 24 (MFWL…AILL), 54 to 74 (LAVL…VLAG), 80 to 100 (PSQQ…PLYF), 112 to 132 (AGVL…AWLL), and 154 to 174 (LLAW…LLIV).

It belongs to the PlsY family. Probably interacts with PlsX.

It is found in the cell inner membrane. The catalysed reaction is an acyl phosphate + sn-glycerol 3-phosphate = a 1-acyl-sn-glycero-3-phosphate + phosphate. Its pathway is lipid metabolism; phospholipid metabolism. Catalyzes the transfer of an acyl group from acyl-phosphate (acyl-PO(4)) to glycerol-3-phosphate (G3P) to form lysophosphatidic acid (LPA). This enzyme utilizes acyl-phosphate as fatty acyl donor, but not acyl-CoA or acyl-ACP. The protein is Glycerol-3-phosphate acyltransferase of Pseudomonas syringae pv. tomato (strain ATCC BAA-871 / DC3000).